The sequence spans 325 residues: Phenylalanine--tRNA ligase alpha subunit (325 aa).

Glu-251 serves as a coordination point for Mg(2+).

It belongs to the class-II aminoacyl-tRNA synthetase family. Phe-tRNA synthetase alpha subunit type 1 subfamily. As to quaternary structure, tetramer of two alpha and two beta subunits. Requires Mg(2+) as cofactor.

The protein resides in the cytoplasm. The catalysed reaction is tRNA(Phe) + L-phenylalanine + ATP = L-phenylalanyl-tRNA(Phe) + AMP + diphosphate + H(+). This is Phenylalanine--tRNA ligase alpha subunit from Thermotoga neapolitana (strain ATCC 49049 / DSM 4359 / NBRC 107923 / NS-E).